Reading from the N-terminus, the 180-residue chain is Sec-independent protein translocase protein TatB (180 aa).

Residues 1–21 (MFDIGWSELLVIGVVALIAIG) form a helical membrane-spanning segment. Residues 95–180 (IEGVDKPVES…AERLKDAKAS (86 aa)) form a disordered region. The segment covering 103–123 (ESQPAASAAPETSATVEAPAT) has biased composition (low complexity). The segment covering 170-180 (EAERLKDAKAS) has biased composition (basic and acidic residues).

This sequence belongs to the TatB family. In terms of assembly, the Tat system comprises two distinct complexes: a TatABC complex, containing multiple copies of TatA, TatB and TatC subunits, and a separate TatA complex, containing only TatA subunits. Substrates initially bind to the TatABC complex, which probably triggers association of the separate TatA complex to form the active translocon.

Its subcellular location is the cell inner membrane. Its function is as follows. Part of the twin-arginine translocation (Tat) system that transports large folded proteins containing a characteristic twin-arginine motif in their signal peptide across membranes. Together with TatC, TatB is part of a receptor directly interacting with Tat signal peptides. TatB may form an oligomeric binding site that transiently accommodates folded Tat precursor proteins before their translocation. In Bradyrhizobium sp. (strain BTAi1 / ATCC BAA-1182), this protein is Sec-independent protein translocase protein TatB.